Consider the following 259-residue polypeptide: MALSTLWLVLMLWTSLFSDSQCSTLSQAELQELEQIHTWVVSRSFPCSVTCGLGLLTQELCPIGVTRNISTSSCKLRTISCLDSWQCGLKTQTATVGRRLVLDCLEEVMEAMGRFSFVVSWRFAFAIITTDDSLFTRYEALSLDKVVLDPLREEDSGTYRCDVLDTGKRRVKRMYKGVKVLSPKDLSLDFAQGLIHWEIPESRFANLTSSRKVYSSSTIRNIVIISVPLSFAIAVVIFIFLFCYSRRARRAAHLCQDNI.

A signal peptide spans 1-18; that stretch reads MALSTLWLVLMLWTSLFS. Over 19-221 the chain is Extracellular; sequence DSQCSTLSQA…KVYSSSTIRN (203 aa). Residues 97–172 enclose the Ig-like domain; the sequence is GRRLVLDCLE…VLDTGKRRVK (76 aa). A disulfide bridge connects residues Cys104 and Cys161. A helical membrane pass occupies residues 222-242; the sequence is IVIISVPLSFAIAVVIFIFLF. Topologically, residues 243–259 are cytoplasmic; the sequence is CYSRRARRAAHLCQDNI.

Forms a complex with izumo1 and spaca6 on spermatocyte cell membrane. The complex binds to oocyte protein bncr. Expressed in sperm.

The protein resides in the cell membrane. Functionally, essential fertilization factor required for male fertility. Part of a conserved trimeric sperm complex with the essential fertilization factors IZUMO1 and SPACA6 which bridges sperm and oocyte membranes during fertilization by binding to IZUMO1R/JUNO on the oocyte. The sequence is that of Transmembrane protein 81 from Danio rerio (Zebrafish).